We begin with the raw amino-acid sequence, 455 residues long: Lysine histidine transporter-like 4 (455 aa).

The Cytoplasmic segment spans residues Met-1–Tyr-38. A helical membrane pass occupies residues Ser-39–Met-59. Over Ser-60–Glu-61 the chain is Extracellular. The chain crosses the membrane as a helical span at residues Leu-62 to Leu-82. Residues Trp-83–Gly-113 lie on the Cytoplasmic side of the membrane. The helical transmembrane segment at Leu-114–Val-134 threads the bilayer. At Thr-135–Arg-158 the chain is on the extracellular side. A helical transmembrane segment spans residues Ile-159–Phe-179. Residues Asn-180–Ser-181 are Cytoplasmic-facing. Residues Ile-182 to Val-202 traverse the membrane as a helical segment. Residues Ala-203–Pro-226 are Extracellular-facing. Residues Leu-227–Leu-247 form a helical membrane-spanning segment. The Cytoplasmic portion of the chain corresponds to Glu-248–Lys-267. Residues Gly-268–Phe-288 traverse the membrane as a helical segment. The Extracellular portion of the chain corresponds to Lys-289 to Thr-307. Residues Ala-308–Tyr-328 form a helical membrane-spanning segment. Topologically, residues Ala-329–Arg-357 are cytoplasmic. Residues Trp-358–Leu-378 traverse the membrane as a helical segment. Ser-379 is a topological domain (extracellular). A helical membrane pass occupies residues Phe-380–Ile-400. Over Leu-401–Cys-412 the chain is Cytoplasmic. The chain crosses the membrane as a helical span at residues Met-413–Leu-433. The Extracellular portion of the chain corresponds to Ala-434–His-455.

It belongs to the amino acid/polyamine transporter 2 family. Amino acid/auxin permease (AAAP) (TC 2.A.18.2) subfamily.

The protein resides in the cell membrane. In terms of biological role, amino acid transporter. The chain is Lysine histidine transporter-like 4 from Arabidopsis thaliana (Mouse-ear cress).